Here is a 222-residue protein sequence, read N- to C-terminus: Ras-related protein Rab-21 (222 aa).

An N-acetylalanine modification is found at Ala2. GTP is bound by residues Gly26, Gly29, Lys30, Thr31, Ser32, Asn43, Asp44, His46, Thr48, and Thr49. Residue Thr31 coordinates Mg(2+). The Switch 1 motif lies at Lys41–Phe54. Thr49 and Asp72 together coordinate Mg(2+). The short motif at Ala74–Gly92 is the Switch 2 element. GTP-binding residues include Gly75, Asn130, Lys131, Asp133, Ala161, and Lys162. S-geranylgeranyl cysteine attachment occurs at residues Cys218 and Cys219. Cysteine methyl ester is present on Cys219. Residues Ser220–Gly222 constitute a propeptide, removed in mature form.

It belongs to the small GTPase superfamily. Rab family. In terms of assembly, interacts with the cytoplasmic tail of integrins ITGA1, ITGA2, ITGA5, ITGA6, ITGA11 and ITGB1; this interaction is dependent upon its GDP/GTP cycle. Interacts with RABGEF1 (via VPS9 domain). Interacts with ANKRD27. Interacts with VAMP7. Interacts (in GTP-bound form) with VAMP8 in response to starvation; the interaction probably regulates VAMP8 endolysosomal trafficking. Interacts (active GTP-bound form) with TMED10; the interaction is indirect and regulates TMED10 abundance and localization at the Golgi. Mg(2+) serves as cofactor.

Its subcellular location is the endoplasmic reticulum membrane. The protein localises to the golgi apparatus. The protein resides in the trans-Golgi network. It localises to the golgi apparatus membrane. It is found in the early endosome membrane. Its subcellular location is the cytoplasmic vesicle membrane. The protein localises to the cleavage furrow. The protein resides in the cell projection. It localises to the neuron projection. The enzyme catalyses GTP + H2O = GDP + phosphate + H(+). With respect to regulation, regulated by guanine nucleotide exchange factors (GEFs) including ANKRD27 and RABGEF1, which promote the exchange of bound GDP for free GTP. Regulated by GTPase activating proteins (GAPs) which increase the GTP hydrolysis activity. Inhibited by GDP dissociation inhibitors (GDIs). Functionally, the small GTPases Rab are key regulators of intracellular membrane trafficking, from the formation of transport vesicles to their fusion with membranes. Rabs cycle between an inactive GDP-bound form and an active GTP-bound form that is able to recruit to membranes different sets of downstream effectors directly responsible for vesicle formation, movement, tethering and fusion. RAB21 is involved in membrane trafficking control. Regulates integrin internalization and recycling, but does not influence the traffic of endosomally translocated receptors in general. As a result, may regulate cell adhesion and migration. During the mitosis of adherent cells, controls the endosomal trafficking of integrins which is required for the successful completion of cytokinesis. Involved in neurite growth. Following SBF2/MTMT13-mediated activation in response to starvation-induced autophagy, binds to and regulates SNARE protein VAMP8 endolysosomal transport required for SNARE-mediated autophagosome-lysosome fusion. Modulates protein levels of the cargo receptors TMED2 and TMED10, and required for appropriate Golgi localization of TMED10. This chain is Ras-related protein Rab-21, found in Mus musculus (Mouse).